The sequence spans 339 residues: Ribosomal RNA small subunit methyltransferase C (339 aa).

The protein belongs to the methyltransferase superfamily. RsmC family. Monomer.

The protein resides in the cytoplasm. It carries out the reaction guanosine(1207) in 16S rRNA + S-adenosyl-L-methionine = N(2)-methylguanosine(1207) in 16S rRNA + S-adenosyl-L-homocysteine + H(+). Specifically methylates the guanine in position 1207 of 16S rRNA in the 30S particle. The sequence is that of Ribosomal RNA small subunit methyltransferase C from Photobacterium profundum (strain SS9).